The chain runs to 486 residues: MTQFIEGKWVAGLGHEVTSINPANQEVIWNSKTATPEQVSQAVDAARNAQFDWFMLGFEGRLAIVEAYRDQLEANKAEMAEVIAQETGKPQWETATEAGAMIGKIGLSVAAYHKRTGTSESETPAGRAVLRHKPHGVVAVFGPYNFPGHLPNGHIVPALLAGNTVVFKPSELTPKVAELMLKLWEKAGLPAGVINLVQGEVETGKALAAHPQIDGLFFTGSSRTGHILHQQYAGDPGKILALEMGGNNPLIIKDVADTKAAVHDIIQSAYISAGQRCTCARRLYVEKGATGDALLEQLVAAIKQIKVGPWNAQPQPFMGSMISETAAKGMVEAQRNLLNLGANSLVELTHIEAGTGLVSPGLIDVTGVIELPDEEYFGPLLQVVRYSDFDEAIKLANTTRYGLSAGILADSREDYDYFLARIRAGIVNWNKQITGASGAAPFGGVGASGNHRASAFYAADYCAYPVASVEADAVSLPATLSPGLSL.

Residue 220–225 participates in NAD(+) binding; it reads GSSRTG. Catalysis depends on residues glutamate 243 and cysteine 277.

The protein belongs to the aldehyde dehydrogenase family. AstD subfamily.

The catalysed reaction is N-succinyl-L-glutamate 5-semialdehyde + NAD(+) + H2O = N-succinyl-L-glutamate + NADH + 2 H(+). The protein operates within amino-acid degradation; L-arginine degradation via AST pathway; L-glutamate and succinate from L-arginine: step 4/5. Functionally, catalyzes the NAD-dependent reduction of succinylglutamate semialdehyde into succinylglutamate. The chain is N-succinylglutamate 5-semialdehyde dehydrogenase from Shewanella halifaxensis (strain HAW-EB4).